A 296-amino-acid chain; its full sequence is Probable deoxyuridine 5'-triphosphate nucleotidohydrolase (296 aa).

A coiled-coil region spans residues 66-102 (EIDKNIVKNLEDKVNCLEQDVQYLKNELKKKDADWQQ).

This sequence belongs to the dUTPase family.

It carries out the reaction dUTP + H2O = dUMP + diphosphate + H(+). It participates in pyrimidine metabolism; dUMP biosynthesis; dUMP from dCTP (dUTP route): step 2/2. This enzyme is involved in nucleotide metabolism: it produces dUMP, the immediate precursor of thymidine nucleotides and it decreases the intracellular concentration of dUTP so that uracil cannot be incorporated into DNA. The polypeptide is Probable deoxyuridine 5'-triphosphate nucleotidohydrolase (Acheta domesticus (House cricket)).